The primary structure comprises 273 residues: Translation initiation factor IF-3, mitochondrial (273 aa).

The N-terminal 32 residues, 1–32 (MAALFLKKLTLQTVKTENYCIRRCLGKYILQG), are a transit peptide targeting the mitochondrion. A propeptide spans 33-92 (PAPTQQPPRPSCLIHAKAFSTEDTQDEMTKKKKNETAFSSVGRKINERIIHVLDEQGNDL) (removed in mature form). The tract at residues 242 to 273 (EEAAWKAAPDTPRRDALNGGDGKDGASGVLPQ) is disordered. Residues 252-265 (TPRRDALNGGDGKD) are compositionally biased toward basic and acidic residues.

This sequence belongs to the IF-3 family.

The protein localises to the mitochondrion. Functionally, IF-3 binds to the 28S ribosomal subunit and shifts the equilibrium between 55S ribosomes and their 39S and 28S subunits in favor of the free subunits, thus enhancing the availability of 28S subunits on which protein synthesis initiation begins. The chain is Translation initiation factor IF-3, mitochondrial (MTIF3) from Bos taurus (Bovine).